Reading from the N-terminus, the 310-residue chain is Olfactory receptor 1496 (310 aa).

Over 1–23 (MNNQTFITQFLLLGLPIPEEHQH) the chain is Extracellular. N-linked (GlcNAc...) asparagine glycosylation is present at asparagine 3. Residues 24–48 (LFYALFLVMYLTTILGNLLIIVLVQ) form a helical membrane-spanning segment. The Cytoplasmic portion of the chain corresponds to 49–55 (LDSQLHT). Residues 56–77 (PMYLFLSNLSFSDLCFSSVTMP) traverse the membrane as a helical segment. The Extracellular portion of the chain corresponds to 78–98 (KLLQNMRSQDTSIPYGGCLAQ). Cysteine 95 and cysteine 187 are oxidised to a cystine. A helical transmembrane segment spans residues 99 to 118 (TYFFMVFGDMESFLLVAMAY). Topologically, residues 119-137 (DRYVAICFPLHYTSIMSPK) are cytoplasmic. A helical transmembrane segment spans residues 138 to 156 (LCTCLVLLLWMLTTSHAMM). Over 157–194 (HTLLAARLSFCENNVVLNFFCDLFVLLKLACSDTYINE) the chain is Extracellular. The helical transmembrane segment at 195 to 217 (LMIFIMSTLLIIIPFFLIVMSYA) threads the bilayer. The Cytoplasmic segment spans residues 218-234 (RIISSILKVPSTQGICK). A helical membrane pass occupies residues 235–258 (VFSTCGSHLSVVSLFYGTIIGLYL). Over 259-270 (CPAGNNSTVKEM) the chain is Extracellular. The chain crosses the membrane as a helical span at residues 271–290 (VMAMMYTVVTPMLNPFIYSL). Over 291 to 310 (RNRDMKRALIRVICSMKITL) the chain is Cytoplasmic.

It belongs to the G-protein coupled receptor 1 family. Olfactory epithelium.

Its subcellular location is the cell membrane. In terms of biological role, odorant receptor. This chain is Olfactory receptor 1496 (Olr1496), found in Rattus norvegicus (Rat).